The chain runs to 158 residues: Arginine repressor (158 aa).

This sequence belongs to the ArgR family.

Its subcellular location is the cytoplasm. It participates in amino-acid biosynthesis; L-arginine biosynthesis [regulation]. In terms of biological role, regulates arginine biosynthesis genes. This Phocaeicola vulgatus (strain ATCC 8482 / DSM 1447 / JCM 5826 / CCUG 4940 / NBRC 14291 / NCTC 11154) (Bacteroides vulgatus) protein is Arginine repressor.